The primary structure comprises 212 residues: Probable GTP-binding protein EngB (212 aa).

Residues 38–210 enclose the EngB-type G domain; the sequence is ALPQIAFVGK…KTSLAKCIKL (173 aa). GTP contacts are provided by residues 46–53, 73–77, 91–94, 158–161, and 189–191; these read GKSNVGKS, GRTRQ, DLPG, TKSD, and VSS. Mg(2+) contacts are provided by Ser53 and Thr75.

The protein belongs to the TRAFAC class TrmE-Era-EngA-EngB-Septin-like GTPase superfamily. EngB GTPase family. It depends on Mg(2+) as a cofactor.

Its function is as follows. Necessary for normal cell division and for the maintenance of normal septation. The protein is Probable GTP-binding protein EngB of Rickettsia bellii (strain OSU 85-389).